We begin with the raw amino-acid sequence, 98 residues long: Co-chaperonin GroES (98 aa).

Belongs to the GroES chaperonin family. Heptamer of 7 subunits arranged in a ring. Interacts with the chaperonin GroEL.

The protein localises to the cytoplasm. Functionally, together with the chaperonin GroEL, plays an essential role in assisting protein folding. The GroEL-GroES system forms a nano-cage that allows encapsulation of the non-native substrate proteins and provides a physical environment optimized to promote and accelerate protein folding. GroES binds to the apical surface of the GroEL ring, thereby capping the opening of the GroEL channel. The polypeptide is Co-chaperonin GroES (Rhizobium leguminosarum bv. trifolii (strain WSM2304)).